The chain runs to 241 residues: Uridylate kinase (241 aa).

15 to 18 (KMSG) is an ATP binding site. The tract at residues 23–28 (GAEGFG) is involved in allosteric activation by GTP. Gly57 is a UMP binding site. Positions 58 and 62 each coordinate ATP. UMP-binding positions include Asp77 and 138 to 145 (TGNPLFTT). Residues Thr165, Phe171, and Asp174 each contribute to the ATP site.

The protein belongs to the UMP kinase family. Homohexamer.

It localises to the cytoplasm. The catalysed reaction is UMP + ATP = UDP + ADP. Its pathway is pyrimidine metabolism; CTP biosynthesis via de novo pathway; UDP from UMP (UMPK route): step 1/1. With respect to regulation, allosterically activated by GTP. Inhibited by UTP. Its function is as follows. Catalyzes the reversible phosphorylation of UMP to UDP. This is Uridylate kinase from Blochmanniella pennsylvanica (strain BPEN).